The chain runs to 178 residues: Cytidylate kinase (178 aa).

7–15 (GLPGTGTTT) contacts ATP.

It belongs to the cytidylate kinase family. Type 2 subfamily.

The protein resides in the cytoplasm. It catalyses the reaction CMP + ATP = CDP + ADP. The enzyme catalyses dCMP + ATP = dCDP + ADP. This is Cytidylate kinase from Methanococcus aeolicus (strain ATCC BAA-1280 / DSM 17508 / OCM 812 / Nankai-3).